Consider the following 396-residue polypeptide: dTDP-epi-vancosaminyltransferase (396 aa).

Residue 10–12 (SRG) coordinates dTDP-beta-L-4-epi-vancosamine. Aspartate 127, glutamine 133, tyrosine 141, and tyrosine 169 together coordinate devancoaminyl-vancomycin. DTDP-beta-L-4-epi-vancosamine is bound by residues arginine 207, serine 230, 277-278 (EV), and 293-298 (HDSAGT).

Belongs to the glycosyltransferase 28 family.

It catalyses the reaction dTDP-beta-L-4-epi-vancosamine + devancoaminyl-vancomycin = chloroorienticin B + dTDP + H(+). The protein operates within antibiotic biosynthesis; vancomycin biosynthesis. Its function is as follows. Catalyzes the attachment of 4-epi-vancosamine from a TDP donor to the beta-OH-Tyr-6 of the aglycone cosubstrate in the biosynthesis of glycopeptide antibiotic chloroeremomycin, a member of the vancomycin group of antibiotics. Strongly prefers devancoaminyl-vancomycin (DVV) as substrate rather than the heptapeptide vancomycin aglycone (AGV). Acts downstream of GtfB. The polypeptide is dTDP-epi-vancosaminyltransferase (gtfA) (Amycolatopsis orientalis (Nocardia orientalis)).